Consider the following 282-residue polypeptide: Pantothenate synthetase (282 aa).

30 to 37 (MGYLHEGH) serves as a coordination point for ATP. The active-site Proton donor is the His37. Gln61 serves as a coordination point for (R)-pantoate. Residue Gln61 participates in beta-alanine binding. 147 to 150 (GQKD) lines the ATP pocket. (R)-pantoate is bound at residue Gln153. ATP-binding positions include Val176 and 184–187 (MSSR).

This sequence belongs to the pantothenate synthetase family. In terms of assembly, homodimer.

It is found in the cytoplasm. The enzyme catalyses (R)-pantoate + beta-alanine + ATP = (R)-pantothenate + AMP + diphosphate + H(+). Its pathway is cofactor biosynthesis; (R)-pantothenate biosynthesis; (R)-pantothenate from (R)-pantoate and beta-alanine: step 1/1. In terms of biological role, catalyzes the condensation of pantoate with beta-alanine in an ATP-dependent reaction via a pantoyl-adenylate intermediate. This chain is Pantothenate synthetase, found in Pelotomaculum thermopropionicum (strain DSM 13744 / JCM 10971 / SI).